A 140-amino-acid polypeptide reads, in one-letter code: Large ribosomal subunit protein uL11 (140 aa).

It belongs to the universal ribosomal protein uL11 family. Part of the ribosomal stalk of the 50S ribosomal subunit. Interacts with L10 and the large rRNA to form the base of the stalk. L10 forms an elongated spine to which L12 dimers bind in a sequential fashion forming a multimeric L10(L12)X complex. In terms of processing, one or more lysine residues are methylated.

Its function is as follows. Forms part of the ribosomal stalk which helps the ribosome interact with GTP-bound translation factors. The polypeptide is Large ribosomal subunit protein uL11 (Staphylococcus aureus (strain bovine RF122 / ET3-1)).